Consider the following 61-residue polypeptide: MAKVIVRKNESLDDALRRFKRGVSKDGTLQEYRKREYYVKPSVARKLKSEAAQKRNKKKGR.

This sequence belongs to the bacterial ribosomal protein bS21 family.

The sequence is that of Small ribosomal subunit protein bS21 from Leuconostoc mesenteroides subsp. mesenteroides (strain ATCC 8293 / DSM 20343 / BCRC 11652 / CCM 1803 / JCM 6124 / NCDO 523 / NBRC 100496 / NCIMB 8023 / NCTC 12954 / NRRL B-1118 / 37Y).